The primary structure comprises 145 residues: MKGLLFIVSLLCLTLHQRVWAYQVIGMKSDVICADIRFTVHCICNELGLFPTSRLSKPCPWPNRGRRSADDEDYLFEEDEDDEFFHPRALSPPAAKSGDERLEDEVSFHSRSKRDIAFHEECCNIRTEHKCNKTTVELYCRRYTR.

An N-terminal signal peptide occupies residues 1–21 (MKGLLFIVSLLCLTLHQRVWA). Cystine bridges form between Cys33/Cys122, Cys42/Cys59, Cys44/Cys140, and Cys123/Cys131. Positions 68 to 112 (SADDEDYLFEEDEDDEFFHPRALSPPAAKSGDERLEDEVSFHSRS) are cleaved as a propeptide — c peptide. A glycan (N-linked (GlcNAc...) asparagine) is linked at Asn132.

As to expression, androgenic gland.

It is found in the secreted. Controls sex differentiation and the formation of male appendages, spermatogenesis, pigmentation, and male specific behavior. This is Androgenic gland hormone (AGH) from Porcellio scaber (Common rough woodlouse).